An 846-amino-acid polypeptide reads, in one-letter code: Protein arginine N-methyltransferase 9 (846 aa).

3 TPR repeats span residues 25–58, 67–100, and 101–134; these read VARS…APEL, QYTL…FPDD, and EVIC…NPDF. SAM-dependent MTase PRMT-type domains are found at residues 137-466 and 530-846; these read AKEN…YLRI and NIPY…AVKP.

The protein belongs to the class I-like SAM-binding methyltransferase superfamily. Protein arginine N-methyltransferase family. As to quaternary structure, found in a complex with PRMT9, SF3B2 and SF3B4. Interacts with SF3B2.

The protein resides in the cytoplasm. The enzyme catalyses L-arginyl-[protein] + 2 S-adenosyl-L-methionine = N(omega),N(omega)'-dimethyl-L-arginyl-[protein] + 2 S-adenosyl-L-homocysteine + 2 H(+). Functionally, arginine methyltransferase that can both catalyze the formation of omega-N monomethylarginine (MMA) and symmetrical dimethylarginine (sDMA). Specifically mediates the symmetrical dimethylation of SF3B2. Involved in the regulation of alternative splicing of pre-mRNA. This chain is Protein arginine N-methyltransferase 9 (Prmt9), found in Mus musculus (Mouse).